The sequence spans 296 residues: Zinc finger protein 75A (296 aa).

Residues 1–66 enclose the KRAB domain; that stretch reads MYFSQEEWEL…VSPEFKDSAG (66 aa). C2H2-type zinc fingers lie at residues 161–183, 189–211, 217–239, 245–267, and 273–295; these read FKCQ…QRIH, YKCQ…LTTH, YKCS…QRTH, FTCH…RRTH, and YTCS…QKLH.

Belongs to the krueppel C2H2-type zinc-finger protein family.

It is found in the nucleus. Functionally, may be involved in transcriptional regulation. The chain is Zinc finger protein 75A (ZNF75A) from Homo sapiens (Human).